We begin with the raw amino-acid sequence, 98 residues long: Cell division protein FtsB (98 aa).

Residues methionine 1 to arginine 3 are Cytoplasmic-facing. Residues leucine 4 to phenylalanine 21 traverse the membrane as a helical segment. The Periplasmic portion of the chain corresponds to glycine 22–aspartate 98. The stretch at histidine 31 to glutamate 74 forms a coiled coil.

The protein belongs to the FtsB family. In terms of assembly, part of a complex composed of FtsB, FtsL and FtsQ.

It is found in the cell inner membrane. Functionally, essential cell division protein. May link together the upstream cell division proteins, which are predominantly cytoplasmic, with the downstream cell division proteins, which are predominantly periplasmic. This chain is Cell division protein FtsB, found in Shewanella halifaxensis (strain HAW-EB4).